Reading from the N-terminus, the 491-residue chain is HEPACAM family member 2 (491 aa).

Residues 1–18 (MWLRVFTAFLSFTAGACS) form the signal peptide. 3 N-linked (GlcNAc...) asparagine glycosylation sites follow: asparagine 73, asparagine 117, and asparagine 153. 2 consecutive Ig-like C2-type domains span residues 137-221 (PVVQ…SDII) and 223-319 (PTIY…THFT). Cystine bridges form between cysteine 158/cysteine 207 and cysteine 258/cysteine 303. Asparagine 308 carries N-linked (GlcNAc...) asparagine glycosylation. The chain crosses the membrane as a helical span at residues 340-360 (LASITGISLFLIISMCLLFLW). Over 361–491 (KKFQPYKVIK…GKHSRAKQCI (131 aa)) the chain is Cytoplasmic. Residues 444–454 (QQQDHPESSSQ) show a composition bias toward polar residues. 2 disordered regions span residues 444-466 (QQQD…DRHD) and 472-491 (ELGH…KQCI). Residues 472-482 (ELGHCKEQDKG) are compositionally biased toward basic and acidic residues.

In terms of processing, poly-ADP-ribosylated (PARsylated) by tankyrase TNKS during late G2 and prophase, leading to translocation to mitotic centrosomes. Post-translationally, N-glycosylated.

The protein localises to the golgi apparatus membrane. It localises to the cytoplasm. The protein resides in the cytoskeleton. It is found in the spindle. Its subcellular location is the microtubule organizing center. The protein localises to the centrosome. It localises to the midbody. Its function is as follows. Required during prometaphase for centrosome maturation. Following poly-ADP-ribosylation (PARsylation) by TNKS, translocates from the Golgi apparatus to mitotic centrosomes and plays a key role in the formation of robust microtubules for prompt movement of chromosomes: anchors AKAP9/CG-NAP, a scaffold protein of the gamma-tubulin ring complex and promotes centrosome maturation. This Bos taurus (Bovine) protein is HEPACAM family member 2 (HEPACAM2).